The following is a 473-amino-acid chain: GTPase Der (473 aa).

2 consecutive EngA-type G domains span residues 3 to 167 and 203 to 378; these read FTVA…GEDR and LRVA…KVWN. GTP is bound by residues 9 to 16, 56 to 60, 119 to 122, 209 to 216, 256 to 260, and 321 to 324; these read GRPNVGKS, DTAGL, NKSE, GRPNAGKS, DTAGM, and NKWD. The KH-like domain occupies 379–463; the sequence is KRISTARLNR…PIRIHFRSPD (85 aa).

It belongs to the TRAFAC class TrmE-Era-EngA-EngB-Septin-like GTPase superfamily. EngA (Der) GTPase family. Associates with the 50S ribosomal subunit.

In terms of biological role, GTPase that plays an essential role in the late steps of ribosome biogenesis. This Rhizobium johnstonii (strain DSM 114642 / LMG 32736 / 3841) (Rhizobium leguminosarum bv. viciae) protein is GTPase Der.